Reading from the N-terminus, the 235-residue chain is MSVISMKQLLEAGVHFGWQTRRWNPKMKKYIFTERNGIYLIDIQKTVKKVEEAYNFVRELAANGGKILFVGTKRQAQESVKEEAERCGMFYVNQRRIGGTLTNFATLQKRIKRLREIEKMEEDGVFDVLPKKEVIGLKKEKERLEKFIGGIKDMKELPDALFVIDPRKERIAVAEARKLNIPIIGIVDTNNDPCEGGYVIPANDDAIRAVKLLTSKIADAVLEAKQGEEAAVAAE.

This sequence belongs to the universal ribosomal protein uS2 family.

This Geobacillus stearothermophilus (Bacillus stearothermophilus) protein is Small ribosomal subunit protein uS2 (rpsB).